Here is a 103-residue protein sequence, read N- to C-terminus: Putative membrane protein insertion efficiency factor (103 aa).

The protein belongs to the UPF0161 family.

The protein localises to the cell inner membrane. Functionally, could be involved in insertion of integral membrane proteins into the membrane. This is Putative membrane protein insertion efficiency factor from Chlamydia felis (strain Fe/C-56) (Chlamydophila felis).